The primary structure comprises 131 residues: Phosphoribosyl-AMP cyclohydrolase (131 aa).

Mg(2+) is bound at residue Asp-90. Cys-91 contributes to the Zn(2+) binding site. The Mg(2+) site is built by Asp-92 and Asp-94. 2 residues coordinate Zn(2+): Cys-107 and Cys-114.

This sequence belongs to the PRA-CH family. In terms of assembly, homodimer. Mg(2+) is required as a cofactor. The cofactor is Zn(2+).

It is found in the cytoplasm. The enzyme catalyses 1-(5-phospho-beta-D-ribosyl)-5'-AMP + H2O = 1-(5-phospho-beta-D-ribosyl)-5-[(5-phospho-beta-D-ribosylamino)methylideneamino]imidazole-4-carboxamide. It participates in amino-acid biosynthesis; L-histidine biosynthesis; L-histidine from 5-phospho-alpha-D-ribose 1-diphosphate: step 3/9. Its function is as follows. Catalyzes the hydrolysis of the adenine ring of phosphoribosyl-AMP. The polypeptide is Phosphoribosyl-AMP cyclohydrolase (Hyphomonas neptunium (strain ATCC 15444)).